A 521-amino-acid chain; its full sequence is Lysine--tRNA ligase (521 aa).

The 'HIGH' region signature appears at 32–40 (PSGTVHIGN). The 'KMSKS' region signature appears at 280 to 284 (KISSS).

This sequence belongs to the class-I aminoacyl-tRNA synthetase family.

The protein localises to the cytoplasm. The enzyme catalyses tRNA(Lys) + L-lysine + ATP = L-lysyl-tRNA(Lys) + AMP + diphosphate. This Borreliella burgdorferi (strain ATCC 35210 / DSM 4680 / CIP 102532 / B31) (Borrelia burgdorferi) protein is Lysine--tRNA ligase (lysS).